The following is a 112-amino-acid chain: MKKIEAMIKPFKLDDVRESLSDIGISGMTITEVRGFGRQKGHTELYRGAEYMVDFLPKVKLEVVVPDELVDQCIEAIIETAQTGKIGDGKIFVYHVERAIRIRTGEENEDAI.

O-UMP-tyrosine is present on Tyr-51.

The protein belongs to the P(II) protein family. In terms of assembly, homotrimer. Uridylylated/deuridylylated by GlnD.

Its function is as follows. P-II indirectly controls the transcription of the glutamine synthetase gene (GlnA). P-II prevents NR-II-catalyzed conversion of NR-I to NR-I-phosphate, the transcriptional activator of GlnA. When P-II is uridylylated to P-II-UMP, these events are reversed. When the ratio of Gln to 2-ketoglutarate decreases, P-II is uridylylated to P-II-UMP, which causes the deadenylation of glutamine synthetase by GlnE, so activating the enzyme. This is Nitrogen regulatory protein P-II (glnB) from Haemophilus influenzae (strain ATCC 51907 / DSM 11121 / KW20 / Rd).